The primary structure comprises 128 residues: Phosphoribosyl-AMP cyclohydrolase (128 aa).

Aspartate 79 contributes to the Mg(2+) binding site. Cysteine 80 contacts Zn(2+). 2 residues coordinate Mg(2+): aspartate 81 and aspartate 83. Zn(2+) contacts are provided by cysteine 97 and cysteine 104.

The protein belongs to the PRA-CH family. As to quaternary structure, homodimer. It depends on Mg(2+) as a cofactor. Requires Zn(2+) as cofactor.

It localises to the cytoplasm. It catalyses the reaction 1-(5-phospho-beta-D-ribosyl)-5'-AMP + H2O = 1-(5-phospho-beta-D-ribosyl)-5-[(5-phospho-beta-D-ribosylamino)methylideneamino]imidazole-4-carboxamide. The protein operates within amino-acid biosynthesis; L-histidine biosynthesis; L-histidine from 5-phospho-alpha-D-ribose 1-diphosphate: step 3/9. Its function is as follows. Catalyzes the hydrolysis of the adenine ring of phosphoribosyl-AMP. The sequence is that of Phosphoribosyl-AMP cyclohydrolase from Saccharophagus degradans (strain 2-40 / ATCC 43961 / DSM 17024).